Here is a 252-residue protein sequence, read N- to C-terminus: 3-deoxy-manno-octulosonate cytidylyltransferase 2 (252 aa).

The protein belongs to the KdsB family.

The protein localises to the cytoplasm. The catalysed reaction is 3-deoxy-alpha-D-manno-oct-2-ulosonate + CTP = CMP-3-deoxy-beta-D-manno-octulosonate + diphosphate. It functions in the pathway nucleotide-sugar biosynthesis; CMP-3-deoxy-D-manno-octulosonate biosynthesis; CMP-3-deoxy-D-manno-octulosonate from 3-deoxy-D-manno-octulosonate and CTP: step 1/1. Its pathway is bacterial outer membrane biogenesis; lipopolysaccharide biosynthesis. Its function is as follows. Activates KDO (a required 8-carbon sugar) for incorporation into bacterial lipopolysaccharide in Gram-negative bacteria. In Actinobacillus pleuropneumoniae serotype 5b (strain L20), this protein is 3-deoxy-manno-octulosonate cytidylyltransferase 2.